The following is a 247-amino-acid chain: UPF0309 protein GWCH70_1414 (247 aa).

Residues 31 to 214 form the SIS domain; sequence VSEAIQKGGI…VLMAENGFEP (184 aa).

The protein belongs to the UPF0309 family.

This chain is UPF0309 protein GWCH70_1414, found in Geobacillus sp. (strain WCH70).